The primary structure comprises 124 residues: UPF0231 protein Shewmr7_3366 (124 aa).

The protein belongs to the UPF0231 family.

The sequence is that of UPF0231 protein Shewmr7_3366 from Shewanella sp. (strain MR-7).